Reading from the N-terminus, the 427-residue chain is Enolase 2 (427 aa).

Gln-165 lines the (2R)-2-phosphoglycerate pocket. The Proton donor role is filled by Glu-207. The Mg(2+) site is built by Asp-244, Glu-287, and Asp-314. 4 residues coordinate (2R)-2-phosphoglycerate: Lys-339, Arg-368, Ser-369, and Lys-390. Catalysis depends on Lys-339, which acts as the Proton acceptor.

Belongs to the enolase family. As to quaternary structure, component of the RNA degradosome, a multiprotein complex involved in RNA processing and mRNA degradation. Mg(2+) is required as a cofactor.

The protein localises to the cytoplasm. It is found in the secreted. Its subcellular location is the cell surface. It carries out the reaction (2R)-2-phosphoglycerate = phosphoenolpyruvate + H2O. It participates in carbohydrate degradation; glycolysis; pyruvate from D-glyceraldehyde 3-phosphate: step 4/5. Its function is as follows. Catalyzes the reversible conversion of 2-phosphoglycerate (2-PG) into phosphoenolpyruvate (PEP). It is essential for the degradation of carbohydrates via glycolysis. The polypeptide is Enolase 2 (Pseudomonas syringae pv. tomato (strain ATCC BAA-871 / DC3000)).